A 424-amino-acid chain; its full sequence is Riboflavin biosynthesis protein RibBA (424 aa).

The DHBP synthase stretch occupies residues 1–206 (MFTCEAGIAS…VDDLITYRYT (206 aa)). D-ribulose 5-phosphate-binding positions include 32-33 (RE), D37, 145-149 (RPGHT), and E169. A Mg(2+)-binding site is contributed by E33. Position 148 (H148) interacts with Mg(2+). The GTP cyclohydrolase II stretch occupies residues 207 to 424 (YDSLVTKISS…YETVERMSCR (218 aa)). 257-261 (RVHSE) contributes to the GTP binding site. Residues C262, C273, and C275 each coordinate Zn(2+). GTP-binding positions include Q278, 301–303 (EGR), and T323. The Proton acceptor; for GTP cyclohydrolase activity role is filled by D335. Catalysis depends on R337, which acts as the Nucleophile; for GTP cyclohydrolase activity. GTP-binding residues include T358 and K363.

This sequence in the N-terminal section; belongs to the DHBP synthase family. In the C-terminal section; belongs to the GTP cyclohydrolase II family. The cofactor is Mg(2+). It depends on Mn(2+) as a cofactor. Zn(2+) serves as cofactor.

It catalyses the reaction D-ribulose 5-phosphate = (2S)-2-hydroxy-3-oxobutyl phosphate + formate + H(+). The enzyme catalyses GTP + 4 H2O = 2,5-diamino-6-hydroxy-4-(5-phosphoribosylamino)-pyrimidine + formate + 2 phosphate + 3 H(+). Its pathway is cofactor biosynthesis; riboflavin biosynthesis; 2-hydroxy-3-oxobutyl phosphate from D-ribulose 5-phosphate: step 1/1. The protein operates within cofactor biosynthesis; riboflavin biosynthesis; 5-amino-6-(D-ribitylamino)uracil from GTP: step 1/4. Its function is as follows. Catalyzes the conversion of D-ribulose 5-phosphate to formate and 3,4-dihydroxy-2-butanone 4-phosphate. Functionally, catalyzes the conversion of GTP to 2,5-diamino-6-ribosylamino-4(3H)-pyrimidinone 5'-phosphate (DARP), formate and pyrophosphate. The polypeptide is Riboflavin biosynthesis protein RibBA (Chlamydia trachomatis serovar D (strain ATCC VR-885 / DSM 19411 / UW-3/Cx)).